Consider the following 186-residue polypeptide: MISTTDFKEGLIFENENGEIVEIVDYQHHRKSQARAVVRVKLRKLGSGSYVETSYRPEDKFKEVSVEKRPFMYLYSEGDMAHFMNNESYDQVAVPLDKLENQRKYLIENMECTGLYINDQLFDIVLPIKVVLTIKSTVPGVKGDTVSNLTKEAELETGVTIKVPLFINEGDKVIMDTRYCTYVERA.

This sequence belongs to the elongation factor P family.

The protein resides in the cytoplasm. It participates in protein biosynthesis; polypeptide chain elongation. In terms of biological role, involved in peptide bond synthesis. Stimulates efficient translation and peptide-bond synthesis on native or reconstituted 70S ribosomes in vitro. Probably functions indirectly by altering the affinity of the ribosome for aminoacyl-tRNA, thus increasing their reactivity as acceptors for peptidyl transferase. This chain is Elongation factor P, found in Elusimicrobium minutum (strain Pei191).